The primary structure comprises 128 residues: Small ribosomal subunit protein uS13 (128 aa).

Over residues 95–118 (GLPVRGQRTHTNARTRKGPKKGLV) the composition is skewed to basic residues. Residues 95 to 128 (GLPVRGQRTHTNARTRKGPKKGLVRKAAAPAPKA) form a disordered region.

The protein belongs to the universal ribosomal protein uS13 family. Part of the 30S ribosomal subunit. Forms a loose heterodimer with protein S19. Forms two bridges to the 50S subunit in the 70S ribosome.

In terms of biological role, located at the top of the head of the 30S subunit, it contacts several helices of the 16S rRNA. In the 70S ribosome it contacts the 23S rRNA (bridge B1a) and protein L5 of the 50S subunit (bridge B1b), connecting the 2 subunits; these bridges are implicated in subunit movement. Contacts the tRNAs in the A and P-sites. This Anaeromyxobacter sp. (strain K) protein is Small ribosomal subunit protein uS13.